The primary structure comprises 161 residues: Phosphopantetheine adenylyltransferase (161 aa).

Position 11 (S11) interacts with substrate. ATP-binding positions include 11 to 12 and H19; that span reads SF. Substrate-binding residues include K43, L75, and R89. ATP-binding positions include 90-92, E100, and 125-131; these read GLR and YSYLSSS.

The protein belongs to the bacterial CoaD family. In terms of assembly, homohexamer. The cofactor is Mg(2+).

The protein localises to the cytoplasm. It carries out the reaction (R)-4'-phosphopantetheine + ATP + H(+) = 3'-dephospho-CoA + diphosphate. Its pathway is cofactor biosynthesis; coenzyme A biosynthesis; CoA from (R)-pantothenate: step 4/5. In terms of biological role, reversibly transfers an adenylyl group from ATP to 4'-phosphopantetheine, yielding dephospho-CoA (dPCoA) and pyrophosphate. In Citrifermentans bemidjiense (strain ATCC BAA-1014 / DSM 16622 / JCM 12645 / Bem) (Geobacter bemidjiensis), this protein is Phosphopantetheine adenylyltransferase.